A 346-amino-acid chain; its full sequence is Glucose-6-phosphatase 3 (346 aa).

At 1-24 (MESTLGAGIVIAEALQNQLAWLEN) the chain is on the lumenal side. The chain crosses the membrane as a helical span at residues 25 to 45 (VWLWITFLGDPKILFLFYFPA). At 46–54 (AYYASRRVG) the chain is on the cytoplasmic side. The helical transmembrane segment at 55–75 (IAVLWISLITEWLNLIFKWFL) threads the bilayer. The Lumenal segment spans residues 76 to 114 (FGDRPFWWVHESGYYSQAPAQVHQFPSSCETGPGSPSGH). Position 79 (Arg79) interacts with substrate. His114 serves as the catalytic Proton donor. The helical transmembrane segment at 115-135 (CMITGAALWPIMTALSSQVAT) threads the bilayer. Residues 136–146 (RARSRWVRVMP) lie on the Cytoplasmic side of the membrane. The helical transmembrane segment at 147–164 (SLAYCTFLLAVGLSRIFI) threads the bilayer. Position 161 (Arg161) interacts with substrate. Residues 165-169 (LAHFP) are Lumenal-facing. His167 (nucleophile) is an active-site residue. A helical membrane pass occupies residues 170–186 (HQVLAGLITGAVLGWLM). Over 187–197 (TPRVPMERELS) the chain is Cytoplasmic. The chain crosses the membrane as a helical span at residues 198–218 (FYGLTALALMLGTSLIYWTLF). Over 219 to 254 (TLGLDLSWSISLAFKWCERPEWIHVDSRPFASLSRD) the chain is Lumenal. A helical transmembrane segment spans residues 255–273 (SGAALGLGIALHSPCYAQV). Residues 274–283 (RRAQLGNGQK) lie on the Cytoplasmic side of the membrane. A helical transmembrane segment spans residues 284 to 304 (IACLVLAMGLLGPLDWLGHPP). The Lumenal portion of the chain corresponds to 305–307 (QIS). Residues 308 to 328 (LFYIFNFLKYTLWPCLVLALV) traverse the membrane as a helical segment. Residues 329 to 346 (PWAVHMFSAQEAPPIHSS) are Cytoplasmic-facing.

The protein belongs to the glucose-6-phosphatase family. Ubiquitously expressed. Highly expressed in skeletal muscle, at intermediate levels in heart, brain, placenta, kidney, colon, thymus, spleen and pancreas. Also detected in testis, prostate, ovary, liver, lung, small intestine and peripheral blood lymphocytes.

Its subcellular location is the endoplasmic reticulum membrane. It catalyses the reaction D-glucose 6-phosphate + H2O = D-glucose + phosphate. The protein operates within carbohydrate biosynthesis; gluconeogenesis. Inhibited by vanadate. Hydrolyzes glucose-6-phosphate to glucose in the endoplasmic reticulum. May form with the glucose-6-phosphate transporter (SLC37A4/G6PT) a ubiquitously expressed complex responsible for glucose production through glycogenolysis and gluconeogenesis. Probably required for normal neutrophil function. This chain is Glucose-6-phosphatase 3 (G6PC3), found in Homo sapiens (Human).